We begin with the raw amino-acid sequence, 320 residues long: Dipeptide transport system permease protein DppC (320 aa).

Helical transmembrane passes span Leu56–Phe76, Leu121–Val141, Met154–Met176, Leu230–Ala252, Phe267–Trp287, and Leu289–Gly309. The 191-residue stretch at Ala117 to Gly307 folds into the ABC transmembrane type-1 domain.

Belongs to the binding-protein-dependent transport system permease family. OppBC subfamily.

The protein resides in the cell membrane. In terms of biological role, probably part of the ABC transporter DppBCDE involved in dipeptide transport. Responsible for the translocation of the substrate across the membrane. In Bacillus subtilis (strain 168), this protein is Dipeptide transport system permease protein DppC (dppC).